Consider the following 609-residue polypeptide: Glutamine--fructose-6-phosphate aminotransferase [isomerizing] (609 aa).

Catalysis depends on Cys-2, which acts as the Nucleophile; for GATase activity. Residues 2–218 (CGIVGAIAQR…EGDIAEITRR (217 aa)) enclose the Glutamine amidotransferase type-2 domain. 2 SIS domains span residues 286–426 (ADEL…LKGL) and 458–599 (LAED…VDQP). The active-site For Fru-6P isomerization activity is Lys-604.

In terms of assembly, homodimer.

Its subcellular location is the cytoplasm. The enzyme catalyses D-fructose 6-phosphate + L-glutamine = D-glucosamine 6-phosphate + L-glutamate. Its function is as follows. Catalyzes the first step in hexosamine metabolism, converting fructose-6P into glucosamine-6P using glutamine as a nitrogen source. The protein is Glutamine--fructose-6-phosphate aminotransferase [isomerizing] of Salmonella typhimurium (strain LT2 / SGSC1412 / ATCC 700720).